Consider the following 699-residue polypeptide: Pollen-specific leucine-rich repeat extensin-like protein 4 (699 aa).

A signal peptide spans 1-39 (MPFYKQPWVFSKVFVLAMAKPPSFGCCFFLLFFSFLSSS). A glycan (N-linked (GlcNAc...) asparagine) is linked at asparagine 106. LRR repeat units lie at residues 133–157 (VTVV…LGLM), 158–180 (TDVA…SFEK), 182–205 (KLMH…VLSW), 206–229 (PDVK…LFKK), 231–251 (LDAI…SLGE), 253–275 (PASV…IGNM), 276–299 (KNLN…IGKL), 301–323 (NVTV…FVGL), and 324–347 (TSVE…ICQL). A glycan (N-linked (GlcNAc...) asparagine) is linked at asparagine 301. The N-linked (GlcNAc...) asparagine glycan is linked to asparagine 352. The tract at residues 411-699 (KCAGGSSTPS…SPPPPMFAGY (289 aa)) is disordered. Pro residues-rich tracts occupy residues 421–466 (KPSP…PVPT), 482–504 (KPSP…PQPD), 518–659 (PPPA…PPAP), and 690–699 (SPPPPMFAGY). The tract at residues 517 to 699 (SPPPAPVNSP…SPPPPMFAGY (183 aa)) is contains the Ser-Pro(4) repeats.

Hydroxylated on proline residues in the S-P-P-P-P repeat. Post-translationally, O-glycosylated on hydroxyprolines. As to expression, expressed in flowers, stamen, pollen, and pollinated carpels.

Its subcellular location is the secreted. The protein resides in the cell wall. Modulates cell morphogenesis by regulating cell wall formation and assembly, and/or growth polarization. In Arabidopsis thaliana (Mouse-ear cress), this protein is Pollen-specific leucine-rich repeat extensin-like protein 4 (PEX4).